Reading from the N-terminus, the 739-residue chain is Ankyrin repeat and SAM domain-containing protein 6 (739 aa).

ANK repeat units follow at residues 1-30, 57-86, 91-120, 124-156, 158-188, 192-221, 226-255, and 259-290; these read MGAS…FVDD, LEVR…DARV, TGWS…DPDH, LGNT…RPDD, KKRP…QVDV, DGAS…DVDR, HGWT…DVQL, and NGYT…LVDK. Residues 295–305 show a composition bias toward basic residues; it reads QRGKSALRRRA. Disordered regions lie at residues 295 to 320 and 449 to 645; these read QRGK…TGLK and LRDA…ITDE. Residues 462-478 are compositionally biased toward polar residues; that stretch reads PGRSSAGSDTASISRVV. Low complexity-rich tracts occupy residues 490–506 and 582–592; these read GPSP…HSSG and SSRSKSTSPTL. A compositionally biased stretch (pro residues) spans 593–603; the sequence is TPSPSPTPAHT. Over residues 604–641 the composition is skewed to low complexity; it reads PAPAHTPAHRPTGASADSQGSASTQQRSRSSGGSSSGT. The SAM domain maps to 643–706; sequence TDEDELSGIL…LAAISELNAG (64 aa).

The protein localises to the cell projection. It localises to the cilium. Its function is as follows. Required for renal function. In Danio rerio (Zebrafish), this protein is Ankyrin repeat and SAM domain-containing protein 6 (anks6).